A 916-amino-acid polypeptide reads, in one-letter code: Protein O-GlcNAcase (916 aa).

The interval 1–46 (MVQKESQAALEERESERNANPAAASGASLEQSVAPAPGEDNPSGAG) is disordered. The GH84 domain occupies 60–336 (FLCGVVEGFY…TLATWYKSNM (277 aa)). 3 residues coordinate a protein: Gly-67, Lys-98, and Asp-174. The Proton donor role is filled by Asp-175. A protein-binding positions include Tyr-219, 278-280 (WDN), Asp-285, and Asn-313. Ser-364 is subject to Phosphoserine. Positions 443–465 (ALSGEPSVLTKEEEKKQPDEEPM) are disordered. The span at 452 to 461 (TKEEEKKQPD) shows a compositional bias: basic and acidic residues.

The protein belongs to the glycosyl hydrolase 84 family. Monomer. Interacts with CLOCK. In terms of processing, proteolytically cleaved by caspase-3 during apoptosis. The fragments interact with each other; cleavage does not decrease enzyme activity.

The protein resides in the cytoplasm. The protein localises to the nucleus. It catalyses the reaction 3-O-(N-acetyl-beta-D-glucosaminyl)-L-seryl-[protein] + H2O = N-acetyl-D-glucosamine + L-seryl-[protein]. The catalysed reaction is 3-O-(N-acetyl-beta-D-glucosaminyl)-L-threonyl-[protein] + H2O = L-threonyl-[protein] + N-acetyl-D-glucosamine. Functionally, cleaves GlcNAc but not GalNAc from O-glycosylated proteins. Deglycosylates a large and diverse number of proteins, such as CRYAB, ELK1, GSDMD, LMNB1 and TAB1. Can use p-nitrophenyl-beta-GlcNAc and 4-methylumbelliferone-GlcNAc as substrates but not p-nitrophenyl-beta-GalNAc or p-nitrophenyl-alpha-GlcNAc (in vitro). Does not bind acetyl-CoA and does not have histone acetyltransferase activity. The chain is Protein O-GlcNAcase from Mus musculus (Mouse).